Here is a 428-residue protein sequence, read N- to C-terminus: MSLHITSATEGQLQVHFTTKQKQYAVPDVPYSIRANVGCSELNTLLGTVLKDAGNKQGAKVAFDFLLNGEFVRSTLSQHLKERDISFEDTIELEYVERYPAPQPQDCLLHDDWVSAVQAKDGWILTGTYDNTVNLWNTKGKHKLTIPGHVAAVKGVAWISLNEQTGVFASASHDQTIMIWEWNMTTNTAECVHVCKGHERGVGCIAVNPAKTQMASGSMDTMLKIWSTELQADKGEPSATKKAKLEQDNVRTPVVTLAGHREFVSGVQWIDNTTIATCSWDHTIKLWDLSMGGIKTEFTGNKSFFDLSYSPLNGMIITASPDKNLRLYDPRSKHGNFVKNTYLGHSQWVQTCRWSTTNEYLFVSGAYDNRVKLWDYRSPKAPIFELIGHEDKVLACDWSNPKYILSGGSDNAVRVFKSRIAVDNTKDD.

Positions 13-97 are ubiquitin-like (UBL) domain; sequence LQVHFTTKQK…EDTIELEYVE (85 aa). 7 WD repeats span residues 109-146, 148-190, 197-236, 259-297, 299-338, 344-384, and 388-426; these read LHDD…KLTI, GHVA…NTAE, GHER…DKGE, GHRE…IKTE, TGNK…GNFV, GHSQ…APIF, and GHED…DNTK.

This sequence belongs to the WD repeat WDR12/YTM1 family.

The protein localises to the nucleus. The protein resides in the nucleolus. It is found in the nucleoplasm. Functionally, required for maturation of ribosomal RNAs and formation of the large ribosomal subunit. The chain is Ribosome biogenesis protein WDR12 homolog from Anopheles gambiae (African malaria mosquito).